A 315-amino-acid chain; its full sequence is Calumenin (315 aa).

Residues 1-19 form the signal peptide; it reads MDLRQFLMCLSLCTAFALS. At Ser44 the chain carries Phosphoserine. Tyr47 carries the post-translational modification Phosphotyrosine. The residue at position 65 (Thr65) is a Phosphothreonine. EF-hand domains lie at 68–103, 104–139, 151–186, 188–223, 229–264, and 265–300; these read ESKE…AQKK, YIYD…TYLD, QMMV…EEYD, MKDI…HDGN, WVKT…SDYD, and HAEA…FVGS. Ser69 carries the phosphoserine modification. Ca(2+) is bound by residues Asp81, Asp83, Asp85, Glu92, Asp117, Asn119, Asp121, and Glu128. Residue Asn131 is glycosylated (N-linked (GlcNAc...) asparagine). Position 164 (Asp164) interacts with Ca(2+). Lys165 is subject to N6-acetyllysine. The Ca(2+) site is built by Asp166, Asp168, Glu175, Asp201, Asn203, Asp205, Glu212, Asp242, Asn244, Asp246, Lys248, and Glu253. Thr254 carries the post-translational modification Phosphothreonine. 2 positions are modified to phosphoserine: Ser261 and Ser277. Positions 278, 280, 282, 284, and 289 each coordinate Ca(2+). A Prevents secretion from ER motif is present at residues 312 to 315; sequence HDEF.

The protein belongs to the CREC family. In terms of assembly, interacts with GGCX.

The protein resides in the endoplasmic reticulum membrane. The protein localises to the golgi apparatus. It is found in the secreted. Its subcellular location is the melanosome. It localises to the sarcoplasmic reticulum lumen. In terms of biological role, involved in regulation of vitamin K-dependent carboxylation of multiple N-terminal glutamate residues. Seems to inhibit gamma-carboxylase GGCX. Binds 7 calcium ions with a low affinity. The sequence is that of Calumenin (CALU) from Bos taurus (Bovine).